We begin with the raw amino-acid sequence, 238 residues long: MRPNARAINQPRPIKITRHYTKHAEGSVLVEFGETKVICTATVEDSVPRFLKGQGKGWVTAEYGMLPRSTHSRMQREAAKGKQGGRTMEIQRLIARSLRAMVDLEALGERAITLDCDVIQADGGTRTASITGACVALIDAINFLLKNGTLTTNPIKGLVAAISVGIVNGETVCDLEYVEDSIAETDMNVVMMEDGRMIEVQGTAEGEPFSHAELLTLLDLAKQGCEQLFVAQRVALAE.

Residues Arg86 and 124 to 126 (GTR) contribute to the phosphate site.

It belongs to the RNase PH family. Homohexameric ring arranged as a trimer of dimers.

The enzyme catalyses tRNA(n+1) + phosphate = tRNA(n) + a ribonucleoside 5'-diphosphate. Functionally, phosphorolytic 3'-5' exoribonuclease that plays an important role in tRNA 3'-end maturation. Removes nucleotide residues following the 3'-CCA terminus of tRNAs; can also add nucleotides to the ends of RNA molecules by using nucleoside diphosphates as substrates, but this may not be physiologically important. Probably plays a role in initiation of 16S rRNA degradation (leading to ribosome degradation) during starvation. This Histophilus somni (strain 129Pt) (Haemophilus somnus) protein is Ribonuclease PH.